We begin with the raw amino-acid sequence, 231 residues long: Putative cobalt transport protein CbiM 2 (231 aa).

Transmembrane regions (helical) follow at residues 8 to 28 (LPIG…IYGI), 41 to 61 (VLPL…LKIP), 75 to 95 (LSAA…VLLF), 108 to 128 (LGAN…LVFV), 136 to 156 (VGIG…TYTV), and 176 to 196 (IAFA…EGII).

Belongs to the CbiM family. In terms of assembly, forms an energy-coupling factor (ECF) transporter complex composed of an ATP-binding protein (A component, CbiO), a transmembrane protein (T component, CbiQ) and 2 possible substrate-capture proteins (S components, CbiM and CbiN) of unknown stoichimetry.

Its subcellular location is the cell membrane. Its pathway is cofactor biosynthesis; adenosylcobalamin biosynthesis. In terms of biological role, part of the energy-coupling factor (ECF) transporter complex CbiMNOQ involved in cobalt import. This Methanocorpusculum labreanum (strain ATCC 43576 / DSM 4855 / Z) protein is Putative cobalt transport protein CbiM 2.